Here is a 797-residue protein sequence, read N- to C-terminus: Xaa-Pro dipeptidyl-peptidase (797 aa).

Active-site charge relay system residues include serine 370, aspartate 490, and histidine 521.

Belongs to the peptidase S15 family. Homodimer.

The protein localises to the cytoplasm. It carries out the reaction Hydrolyzes Xaa-Pro-|- bonds to release unblocked, N-terminal dipeptides from substrates including Ala-Pro-|-p-nitroanilide and (sequentially) Tyr-Pro-|-Phe-Pro-|-Gly-Pro-|-Ile.. Functionally, removes N-terminal dipeptides sequentially from polypeptides having unsubstituted N-termini provided that the penultimate residue is proline. The sequence is that of Xaa-Pro dipeptidyl-peptidase from Lacticaseibacillus paracasei (strain ATCC 334 / BCRC 17002 / CCUG 31169 / CIP 107868 / KCTC 3260 / NRRL B-441) (Lactobacillus paracasei).